The following is a 369-amino-acid chain: MLRVYTQLERGNQWLKQYEGRSPIFACVLGFTETGLIPNVSTAGATPADRSLTALADAEFLFNGPQSQPTYPLPDLAQGVSPAMISWPIYTSQNFPFQLFNAGLRHSPPVPTVDLRGQAARCLSSGMALPLPIVELLFQQGLEWGETLAKQAADGYLILAECVVGGTSTAQGILTGLGFSVAGQVNSSHPVCNHQQKHQLVEAGLAQAGQQDWLAHPLALVAAVGDPMQVVVAGMMITASRTCGVMLAGGTQMLAVYALARQISQIFRLPWTPDNLLVGTTRWVVEDPSGDTVALANQVGEVPLVATQLSFATSRYPQLQIFEQGFVKEGVGAGGCAIAAHLYQGWQQNDILNAVEQTLEDYYRLRDPN.

Belongs to the UPF0284 family.

In Acaryochloris marina (strain MBIC 11017), this protein is UPF0284 protein AM1_5137.